The chain runs to 622 residues: Prolactin receptor (622 aa).

The first 24 residues, 1–24 (MKENVASATVFTLLLFLNTCLLNG), serve as a signal peptide directing secretion. The Extracellular segment spans residues 25-234 (QLPPGKPEIF…QIPSDFTMND (210 aa)). Fibronectin type-III domains lie at 27–128 (PPGK…VQPD) and 129–229 (PPLE…IPSD). Cysteine 36 and cysteine 46 are oxidised to a cystine. The N-linked (GlcNAc...) asparagine glycan is linked to asparagine 59. An intrachain disulfide couples cysteine 75 to cysteine 86. N-linked (GlcNAc...) asparagine glycosylation is present at asparagine 104. Residues aspartate 211 and histidine 212 each contribute to the Zn(2+) site. The WSXWS motif signature appears at 215–219 (WSAWS). The N-linked (GlcNAc...) asparagine glycan is linked to asparagine 233. A helical membrane pass occupies residues 235-258 (TTVWISVAVLSAVICLIIVWAVAL). Over 259–622 (KGYSMVTCIF…DPACFTHSFH (364 aa)) the chain is Cytoplasmic. Positions 267–275 (IFPPVPGPK) match the Box 1 motif motif. Disordered stretches follow at residues 326–378 (MSVH…YDPE), 461–505 (SSQT…GSAK), and 520–545 (ALSL…NNKE). Basic and acidic residues predominate over residues 466-486 (KSREEGKATQQREVESFHSET).

The protein belongs to the type I cytokine receptor family. Type 1 subfamily. In terms of assembly, homodimer upon hormone binding. Interacts with SMARCA1. Interacts with GH1. Interacts with CSH. Interacts with NEK3 and VAV2 and this interaction is prolactin-dependent. Expressed in breast, placenta, kidney, liver and pancreas.

It localises to the membrane. The protein localises to the secreted. Functionally, this is a receptor for the anterior pituitary hormone prolactin (PRL). Acts as a prosurvival factor for spermatozoa by inhibiting sperm capacitation through suppression of SRC kinase activation and stimulation of AKT. Isoform 4 is unable to transduce prolactin signaling. Isoform 6 is unable to transduce prolactin signaling. This Homo sapiens (Human) protein is Prolactin receptor (PRLR).